Here is a 288-residue protein sequence, read N- to C-terminus: 33 kDa chaperonin (288 aa).

Intrachain disulfides connect cysteine 236-cysteine 238 and cysteine 269-cysteine 272.

Belongs to the HSP33 family. Under oxidizing conditions two disulfide bonds are formed involving the reactive cysteines. Under reducing conditions zinc is bound to the reactive cysteines and the protein is inactive.

It is found in the cytoplasm. Redox regulated molecular chaperone. Protects both thermally unfolding and oxidatively damaged proteins from irreversible aggregation. Plays an important role in the bacterial defense system toward oxidative stress. The chain is 33 kDa chaperonin from Lactococcus lactis subsp. cremoris (strain MG1363).